A 469-amino-acid chain; its full sequence is uncharacterized protein (469 aa).

The span at 152–161 (VREGKEEKKG) shows a compositional bias: basic and acidic residues. The segment at 152 to 174 (VREGKEEKKGGPPGRGPPGWRRR) is disordered. 2 coiled-coil regions span residues 346 to 375 (KAALEQNDRLRSELEMEVALLQSAKERSES) and 423 to 453 (SDITENRIKSIEHEAIQLETENMILKKKIKG).

This is an uncharacterized protein from Homo sapiens (Human).